Consider the following 285-residue polypeptide: Protoheme IX farnesyltransferase (285 aa).

8 helical membrane passes run 19–39 (RIIW…GKLM), 40–60 (PLSI…SMII), 90–110 (AIYV…LDNP), 111–131 (LTSF…TVWL), 135–155 (SPLN…AGYA), 165–185 (SILL…ALAL), 220–240 (IPFA…VAGI), and 265–285 (FKFS…TRLI).

The protein belongs to the UbiA prenyltransferase family. Protoheme IX farnesyltransferase subfamily.

It is found in the cell membrane. It catalyses the reaction heme b + (2E,6E)-farnesyl diphosphate + H2O = Fe(II)-heme o + diphosphate. It participates in porphyrin-containing compound metabolism; heme O biosynthesis; heme O from protoheme: step 1/1. In terms of biological role, converts heme B (protoheme IX) to heme O by substitution of the vinyl group on carbon 2 of heme B porphyrin ring with a hydroxyethyl farnesyl side group. This Metallosphaera sedula (strain ATCC 51363 / DSM 5348 / JCM 9185 / NBRC 15509 / TH2) protein is Protoheme IX farnesyltransferase.